An 896-amino-acid chain; its full sequence is MADTTVEKLASEVGKSADRLVEQFSEAGIKKSKADTVSESEKQQLLEFLKKQHGGESAPTKMTLQRKSVSTLSVGSGSASKDVKVEVRKKRTFVKRDPAADAEAEAAAKAEAEVKAAEEAASKAKADAEAKAKAEAKAKADAEAKEKAKASAAEKAKPVAVTAEEKAAQDEADKLQAAKDTAAKAKADEEAKAAAEIARKLAEENSARWAEEEKQRKESEKTGDHHVTTSTEARAAEDTADANAEKRGRRPRKATPAPAAAPANTGKGKRRGGKDNRRDSRNARGGRNARNNRSVAPESMDHAFTKPVAAVKTDVSIGETVSVSELASKMSIKATEIIKQMMKMGSMVTINQVLDQETAQLVAEEMGHKVVLTRENELEHQVLADRDANIQAESRAPVVTIMGHVDHGKTSLLDYIRRAKVASGEAGGITQHIGAYHVETDNGMITFLDTPGHAAFTAMRARGAQATDIVILVVAADDGVMPQTIEAIQHAKAGGVPLIVAVNKIDKPEADPERVKSELSQHGVMSEDWGGNNMFVHVSAKSGEGIDELLEGILLEAEVLELKAIKEGMAAGVVVESKLDKGRGPVATVLVQEGTLKQGDIVLCGLEYGKVRAMRDENGRAIKEAGPSIPVEILGLSGVPSAGDEATVVRDERKAREVALYRQGKFRDVKLARQQKSKLENMFANMVEGEVQELNIILKADVQGSLEAIADSLNKLSTDEVKVNIIARGVGGLTETDASLAAASNAIMIGFNIRADAQARKVIDAESVDLRYYSVIYHLIDEVRNAMSGLLAPEFKQVILGLAEVRDVFKSPKIGAIAGCMVTEGTIKRSAPIRVLRENVVIYEGELESLRRFKDDVADVRNGMECGIGVKNYNDVRVGDQIEVFETIEIARSLEE.

Disordered regions lie at residues 53–81 (HGGESAPTKMTLQRKSVSTLSVGSGSASK) and 117–301 (AEEA…ESMD). A compositionally biased stretch (polar residues) spans 60-79 (TKMTLQRKSVSTLSVGSGSA). Positions 117–227 (AEEAASKAKA…ESEKTGDHHV (111 aa)) are enriched in basic and acidic residues. Low complexity predominate over residues 254–266 (ATPAPAAAPANTG). The segment covering 273–282 (GKDNRRDSRN) has biased composition (basic and acidic residues). Positions 283–294 (ARGGRNARNNRS) are enriched in low complexity. One can recognise a tr-type G domain in the interval 394–563 (SRAPVVTIMG…LLEAEVLELK (170 aa)). A G1 region spans residues 403 to 410 (GHVDHGKT). 403 to 410 (GHVDHGKT) lines the GTP pocket. The interval 428–432 (GITQH) is G2. Positions 449–452 (DTPG) are G3. Residues 449 to 453 (DTPGH) and 503 to 506 (NKID) each bind GTP. A G4 region spans residues 503–506 (NKID). Residues 539-541 (SAK) are G5.

Belongs to the TRAFAC class translation factor GTPase superfamily. Classic translation factor GTPase family. IF-2 subfamily.

It is found in the cytoplasm. Functionally, one of the essential components for the initiation of protein synthesis. Protects formylmethionyl-tRNA from spontaneous hydrolysis and promotes its binding to the 30S ribosomal subunits. Also involved in the hydrolysis of GTP during the formation of the 70S ribosomal complex. In Shewanella sediminis (strain HAW-EB3), this protein is Translation initiation factor IF-2.